We begin with the raw amino-acid sequence, 407 residues long: Na(+)-translocating NADH-quinone reductase subunit F (407 aa).

Residues 6–26 traverse the membrane as a helical segment; it reads IFLAIGMFTAIVLGLVAIILV. In terms of domain architecture, 2Fe-2S ferredoxin-type spans 35 to 127; that stretch reads GDVTIQINGE…DMQIRVPEEV (93 aa). Residues cysteine 70, cysteine 76, cysteine 79, and cysteine 111 each contribute to the [2Fe-2S] cluster site. In terms of domain architecture, FAD-binding FR-type spans 130-269; the sequence is VKKWECTVES…YGPFGEFFAK (140 aa).

Belongs to the NqrF family. In terms of assembly, composed of six subunits; NqrA, NqrB, NqrC, NqrD, NqrE and NqrF. [2Fe-2S] cluster is required as a cofactor. It depends on FAD as a cofactor.

The protein resides in the cell inner membrane. The catalysed reaction is a ubiquinone + n Na(+)(in) + NADH + H(+) = a ubiquinol + n Na(+)(out) + NAD(+). NQR complex catalyzes the reduction of ubiquinone-1 to ubiquinol by two successive reactions, coupled with the transport of Na(+) ions from the cytoplasm to the periplasm. The first step is catalyzed by NqrF, which accepts electrons from NADH and reduces ubiquinone-1 to ubisemiquinone by a one-electron transfer pathway. In Pseudomonas paraeruginosa (strain DSM 24068 / PA7) (Pseudomonas aeruginosa (strain PA7)), this protein is Na(+)-translocating NADH-quinone reductase subunit F.